Reading from the N-terminus, the 131-residue chain is uncharacterized protein (131 aa).

The CCHC-type; degenerate zinc finger occupies Val64–Gly81.

This is an uncharacterized protein from Homo sapiens (Human).